Here is a 66-residue protein sequence, read N- to C-terminus: MPKLKTKSGAKKRFKVTGTGKVMSAHAGKRHGMIKRTKKQIRQLRGTRVLFKTDGDNIKQYFLPNA.

Basic residues-rich tracts occupy residues 1 to 15 (MPKL…KRFK) and 27 to 40 (AGKR…TKKQ). Residues 1-40 (MPKLKTKSGAKKRFKVTGTGKVMSAHAGKRHGMIKRTKKQ) are disordered.

The protein belongs to the bacterial ribosomal protein bL35 family.

The sequence is that of Large ribosomal subunit protein bL35 from Rhodopseudomonas palustris (strain BisA53).